Reading from the N-terminus, the 72-residue chain is MSCSCGSSCGCGSNCTCGKMYPDLEEKSSSAQATVVLGVAPEKAHFEAAAESGETAHGCGCGSSCKCNPCNC.

Belongs to the metallothionein superfamily. Type 15 family. Expressed in leaves of mature plants.

In terms of biological role, metallothioneins have a high content of cysteine residues that bind various heavy metals. Functions as a metal chelator of nickel (Ni), cadmium (Cd), zinc (Zn) and copper (Cu). Possesses higher affinity for Ni and Cd ions compared to Zn and Cu ions. The polypeptide is Metallothionein-like protein 1B (MT1B) (Oryza sativa subsp. japonica (Rice)).